The primary structure comprises 596 residues: ATP-dependent RNA helicase dbp3 (596 aa).

A compositionally biased stretch (basic and acidic residues) spans Met-1–Tyr-17. Disordered regions lie at residues Met-1–Ser-87 and Glu-115–Thr-139. The span at Ser-21–Arg-30 shows a compositional bias: basic residues. The stretch at Ile-47–Ile-120 forms a coiled coil. A compositionally biased stretch (polar residues) spans Ser-123–Thr-139. The Q motif signature appears at Ile-180–Ala-207. The Helicase ATP-binding domain maps to Trp-210–Ile-386. Residue Ala-223–Thr-230 coordinates ATP. The DEAD box signature appears at Asp-332–Asp-335. The 150-residue stretch at Arg-417–Gly-566 folds into the Helicase C-terminal domain.

It belongs to the DEAD box helicase family. DDX5/DBP2 subfamily.

The protein localises to the nucleus. Its subcellular location is the nucleolus. It catalyses the reaction ATP + H2O = ADP + phosphate + H(+). ATP-dependent RNA helicase required for 60S ribosomal subunit synthesis. Involved in efficient pre-rRNA processing, predominantly at site A3, which is necessary for the normal formation of 25S and 5.8S rRNAs. The protein is ATP-dependent RNA helicase dbp3 (dbp3) of Sclerotinia sclerotiorum (strain ATCC 18683 / 1980 / Ss-1) (White mold).